The following is a 381-amino-acid chain: Homoserine O-succinyltransferase (381 aa).

The region spanning 45 to 360 (NAVLVCHALN…PHGHDAFLLD (316 aa)) is the AB hydrolase-1 domain. The active-site Nucleophile is the serine 151. Arginine 221 is a binding site for substrate. Active-site residues include aspartate 321 and histidine 354. Aspartate 355 contacts substrate.

Belongs to the AB hydrolase superfamily. MetX family. Homodimer.

The protein resides in the cytoplasm. It catalyses the reaction L-homoserine + succinyl-CoA = O-succinyl-L-homoserine + CoA. It functions in the pathway amino-acid biosynthesis; L-methionine biosynthesis via de novo pathway; O-succinyl-L-homoserine from L-homoserine: step 1/1. Functionally, transfers a succinyl group from succinyl-CoA to L-homoserine, forming succinyl-L-homoserine. This Burkholderia multivorans (strain ATCC 17616 / 249) protein is Homoserine O-succinyltransferase.